The following is a 283-amino-acid chain: MRYIGAHVSAAGGVSNAPINAAKIGANAFALFTKNQRQWSAKELSEGEIEQFKANLKASGISADHVLPHASYLINLGHPEKEARAKSLEAFIDEIERASKLGLKLLNFHPGSHLKQISQNECLDNIARCINEALKRTSGVKLVIENTAAQGSNLGFDFAQLAYLIERVDDESRVGVCIDTCHAFAAGYDLRSKEAYAKTMGEFDAVIGYKFLSGMHLNDAKFGLGSKKDRHESLGKGELGLGAFENIINDDKIGEIPLILETIDESIWEDEIKILRNLEKEKL.

Residues His69, His109, Glu145, Asp179, His182, His216, Asp229, His231, and Glu261 each contribute to the Zn(2+) site.

It belongs to the AP endonuclease 2 family. Zn(2+) is required as a cofactor.

It catalyses the reaction Endonucleolytic cleavage to 5'-phosphooligonucleotide end-products.. Its function is as follows. Endonuclease IV plays a role in DNA repair. It cleaves phosphodiester bonds at apurinic or apyrimidinic (AP) sites, generating a 3'-hydroxyl group and a 5'-terminal sugar phosphate. In Campylobacter concisus (strain 13826), this protein is Probable endonuclease 4.